A 244-amino-acid chain; its full sequence is Ubiquinone/menaquinone biosynthesis C-methyltransferase UbiE (244 aa).

Residues Thr70, Asp91, and 117 to 118 contribute to the S-adenosyl-L-methionine site; that span reads DA.

It belongs to the class I-like SAM-binding methyltransferase superfamily. MenG/UbiE family.

It carries out the reaction a 2-demethylmenaquinol + S-adenosyl-L-methionine = a menaquinol + S-adenosyl-L-homocysteine + H(+). The catalysed reaction is a 2-methoxy-6-(all-trans-polyprenyl)benzene-1,4-diol + S-adenosyl-L-methionine = a 5-methoxy-2-methyl-3-(all-trans-polyprenyl)benzene-1,4-diol + S-adenosyl-L-homocysteine + H(+). The protein operates within quinol/quinone metabolism; menaquinone biosynthesis; menaquinol from 1,4-dihydroxy-2-naphthoate: step 2/2. It participates in cofactor biosynthesis; ubiquinone biosynthesis. Its function is as follows. Methyltransferase required for the conversion of demethylmenaquinol (DMKH2) to menaquinol (MKH2) and the conversion of 2-polyprenyl-6-methoxy-1,4-benzoquinol (DDMQH2) to 2-polyprenyl-3-methyl-6-methoxy-1,4-benzoquinol (DMQH2). The protein is Ubiquinone/menaquinone biosynthesis C-methyltransferase UbiE of Nitrosospira multiformis (strain ATCC 25196 / NCIMB 11849 / C 71).